We begin with the raw amino-acid sequence, 64 residues long: MQGTELREKTTEELEALLKELRAKLVNLKFQLSVGKLTDHTAITKTKRDIARVLTVLRERGIKL.

The protein belongs to the universal ribosomal protein uL29 family.

This Coprothermobacter proteolyticus (strain ATCC 35245 / DSM 5265 / OCM 4 / BT) protein is Large ribosomal subunit protein uL29.